Reading from the N-terminus, the 626-residue chain is Carnitine O-acetyltransferase (626 aa).

Position 93 is an N6-succinyllysine (Lys93). Position 261 is an N6-acetyllysine; alternate (Lys261). Lys261 carries the N6-succinyllysine; alternate modification. Position 268 is an N6-acetyllysine (Lys268). His343 acts as the Proton acceptor in catalysis. CoA is bound by residues Lys419 and 423-430; that span reads KSEKLSPD. Positions 452 and 454 each coordinate (R)-carnitine. Ser456 contacts CoA. A (R)-carnitine-binding site is contributed by Thr465. Residues Arg504 and Gln555 each contribute to the CoA site. The Microbody targeting signal motif lies at 624–626; the sequence is AKL.

Belongs to the carnitine/choline acetyltransferase family. In terms of assembly, monomer. In terms of tissue distribution, mostly in skeletal muscle, less in heart, liver and pancreas, only weakly detectable in brain, placenta, lung and kidney.

It localises to the endoplasmic reticulum. The protein localises to the peroxisome. It is found in the mitochondrion inner membrane. Its subcellular location is the mitochondrion. The catalysed reaction is (R)-carnitine + acetyl-CoA = O-acetyl-(R)-carnitine + CoA. It catalyses the reaction propanoyl-CoA + (R)-carnitine = O-propanoyl-(R)-carnitine + CoA. The enzyme catalyses butanoyl-CoA + (R)-carnitine = O-butanoyl-(R)-carnitine + CoA. It carries out the reaction hexanoyl-CoA + (R)-carnitine = O-hexanoyl-(R)-carnitine + CoA. The catalysed reaction is octanoyl-CoA + (R)-carnitine = O-octanoyl-(R)-carnitine + CoA. It catalyses the reaction decanoyl-CoA + (R)-carnitine = O-decanoyl-(R)-carnitine + CoA. The enzyme catalyses 3-methylbutanoyl-CoA + (R)-carnitine = O-3-methylbutanoyl-(R)-carnitine + CoA. It carries out the reaction 2-methylpropanoyl-CoA + (R)-carnitine = O-isobutanoyl-(R)-carnitine + CoA. The catalysed reaction is 2-methylbutanoyl-CoA + (R)-carnitine = O-2-methylbutanoyl-(R)-carnitine + CoA. It catalyses the reaction acetoacetyl-CoA + (R)-carnitine = O-3-oxobutanoyl-(R)-carnitine + CoA. The enzyme catalyses 3-hydroxybutanoyl-CoA + (R)-carnitine = O-3-hydroxybutanoyl-(R)-carnitine + CoA. It carries out the reaction 4,8-dimethylnonanoyl-CoA + (R)-carnitine = O-4,8-dimethylnonanoyl-(R)-carnitine + CoA. The catalysed reaction is 2,6-dimethylheptanoyl-CoA + (R)-carnitine = O-2,6-dimethylheptanoyl-(R)-carnitine + CoA. Catalyzes the reversible transfer of acyl groups from carnitine to coenzyme A (CoA) and regulates the acyl-CoA/CoA ratio. Also plays a crucial role in the transport of fatty acids for beta-oxidation. Responsible for the synthesis of short- and branched-chain acylcarnitines. Active towards some branched-chain amino acid oxidation pathway (BCAAO) intermediates. Trans-2-enoyl-CoAs and 2-methylacyl-CoAs are poor substrates. The sequence is that of Carnitine O-acetyltransferase from Homo sapiens (Human).